The following is a 150-amino-acid chain: UPF0756 membrane protein ABAYE1440 (150 aa).

A run of 4 helical transmembrane segments spans residues 1–21 (MLAQ…CGLL), 45–65 (FFPY…TIGV), 83–103 (FISF…WLGG), and 115–135 (VVAG…GVPV).

The protein belongs to the UPF0756 family.

The protein resides in the cell membrane. The chain is UPF0756 membrane protein ABAYE1440 from Acinetobacter baumannii (strain AYE).